The primary structure comprises 460 residues: NADH-ubiquinone oxidoreductase chain 4 (460 aa).

The next 13 membrane-spanning stretches (helical) occupy residues 22–42 (WLWP…LSWL), 61–81 (PLST…ILAS), 97–114 (YISL…AFSA), 118–140 (IMFY…RWGN), 149–169 (TYFL…LLLL), 196–216 (IWWT…GVHL), 226–246 (PIAG…YGMM), 259–279 (LSYP…SICM), 286–305 (SLIA…GILI), 309–331 (WGFT…LFCL), 352–372 (MALP…LALP), 395–415 (IALT…MFLM), and 437–457 (LLIA…ELIW).

This sequence belongs to the complex I subunit 4 family.

The protein resides in the mitochondrion membrane. The enzyme catalyses a ubiquinone + NADH + 5 H(+)(in) = a ubiquinol + NAD(+) + 4 H(+)(out). In terms of biological role, core subunit of the mitochondrial membrane respiratory chain NADH dehydrogenase (Complex I) that is believed to belong to the minimal assembly required for catalysis. Complex I functions in the transfer of electrons from NADH to the respiratory chain. The immediate electron acceptor for the enzyme is believed to be ubiquinone. In Tetraodon nigroviridis (Spotted green pufferfish), this protein is NADH-ubiquinone oxidoreductase chain 4 (MT-ND4).